The chain runs to 334 residues: Ketol-acid reductoisomerase (NADP(+)) (334 aa).

A KARI N-terminal Rossmann domain is found at 1-181; the sequence is MNRYYDKNAD…GGGRTGILET (181 aa). Residues 24–27, R47, S50, S52, and 82–85 each bind NADP(+); these read YGSQ and DEFQ. Residue H107 is part of the active site. G133 contacts NADP(+). Residues 182–323 form the KARI C-terminal knotted domain; sequence SFKDETETDL…ESLRSMMPWI (142 aa). Mg(2+) contacts are provided by D190, E194, E226, and E230. S251 is a binding site for substrate.

This sequence belongs to the ketol-acid reductoisomerase family. Mg(2+) serves as cofactor.

It catalyses the reaction (2R)-2,3-dihydroxy-3-methylbutanoate + NADP(+) = (2S)-2-acetolactate + NADPH + H(+). It carries out the reaction (2R,3R)-2,3-dihydroxy-3-methylpentanoate + NADP(+) = (S)-2-ethyl-2-hydroxy-3-oxobutanoate + NADPH + H(+). Its pathway is amino-acid biosynthesis; L-isoleucine biosynthesis; L-isoleucine from 2-oxobutanoate: step 2/4. It functions in the pathway amino-acid biosynthesis; L-valine biosynthesis; L-valine from pyruvate: step 2/4. Involved in the biosynthesis of branched-chain amino acids (BCAA). Catalyzes an alkyl-migration followed by a ketol-acid reduction of (S)-2-acetolactate (S2AL) to yield (R)-2,3-dihydroxy-isovalerate. In the isomerase reaction, S2AL is rearranged via a Mg-dependent methyl migration to produce 3-hydroxy-3-methyl-2-ketobutyrate (HMKB). In the reductase reaction, this 2-ketoacid undergoes a metal-dependent reduction by NADPH to yield (R)-2,3-dihydroxy-isovalerate. This is Ketol-acid reductoisomerase (NADP(+)) from Ruthia magnifica subsp. Calyptogena magnifica.